The sequence spans 500 residues: tRNA nucleotidyltransferase cca1 (500 aa).

A flexible loop region spans residues 122-139 (DYTNSNSSNKLVFGTPLE). Residues 231-241 (ERIGVEVDKML) carry the ERhxxExxxhh motif motif.

The protein belongs to the tRNA nucleotidyltransferase/poly(A) polymerase family.

It catalyses the reaction a tRNA precursor + 2 CTP = a tRNA with a 3' CC end + 2 diphosphate. In terms of biological role, tRNA nucleotidyltransferase involved in the synthesis of the tRNA CCA terminus. In contrast to what is usually observed in eukaryotes for which one enzyme synthesizes the whole tRNA CCA terminus, in S.pombe, cca1 specifically adds two cytidine residues to a tRNA substrate lacking this sequence while cca2 specifically adds the terminal adenosine residue thereby completing the CCA sequence. The protein is tRNA nucleotidyltransferase cca1 of Schizosaccharomyces pombe (strain 972 / ATCC 24843) (Fission yeast).